Reading from the N-terminus, the 1138-residue chain is Pesticidal crystal protein Cry7Aa (1138 aa).

It belongs to the delta endotoxin family.

Functionally, promotes colloidosmotic lysis by binding to the midgut epithelial cells of Coleoptera. This protein is not toxic in its natural form. It is highly toxic to Colorado potato beetle larvae after an in vitro solubilization and trypsin activation step. In Bacillus thuringiensis, this protein is Pesticidal crystal protein Cry7Aa (cry7Aa).